A 182-amino-acid chain; its full sequence is Ribulose bisphosphate carboxylase small subunit, chloroplastic (182 aa).

Residues 1–58 constitute a chloroplast transit peptide; the sequence is MASSMLSTATVASINRVSPAQATMVAPFTGLKSTPVFPTTRKTNSDITSITSNGGKVQ.

Belongs to the RuBisCO small chain family. Heterohexadecamer of 8 large and 8 small subunits.

Its subcellular location is the plastid. The protein resides in the chloroplast. Its function is as follows. RuBisCO catalyzes two reactions: the carboxylation of D-ribulose 1,5-bisphosphate, the primary event in carbon dioxide fixation, as well as the oxidative fragmentation of the pentose substrate. Both reactions occur simultaneously and in competition at the same active site. Although the small subunit is not catalytic it is essential for maximal activity. The protein is Ribulose bisphosphate carboxylase small subunit, chloroplastic of Manihot esculenta (Cassava).